A 534-amino-acid polypeptide reads, in one-letter code: Echilunin cytochrome P450 monooxygenase (534 aa).

The chain crosses the membrane as a helical span at residues 18–38 (VSPAALSWAVVAIYLGTFFWL). C441 provides a ligand contact to heme.

This sequence belongs to the cytochrome P450 family. It depends on heme as a cofactor.

Its subcellular location is the membrane. The catalysed reaction is preechinulin + reduced [NADPH--hemoprotein reductase] + O2 = neoechinulin A + oxidized [NADPH--hemoprotein reductase] + 2 H2O + H(+). It participates in secondary metabolite biosynthesis. The protein operates within alkaloid biosynthesis. In terms of biological role, cytochrome P450 monooxygenase; part of the gene cluster that mediates the biosynthesis of echinulin family alkaloid. The pathway begins with the biosynthesis of the cyclic dipeptide cyclo-L-Trp-L-Ala (cyclo-TA) by the NRPS echPS via condensation of L-alanine and L-tryptophan. The prenyltransferase echPT1 then catalyzes the first prenylation step, a reverse prenylation reaction at C2, to yield preechinulin. Preechinulin is the substrate of the cytochrome P450 monooxygenase echP450 that catalyzes the formation of the double bond between C10 and C11 to produce neoechulin A. The unique prenyltransferase echPT2 functions as a competitive enzyme with echP450 for preechinulin metabolization and uses preechinulin for effective regiospecific prenylations. Preechinulin is prenylated by echPT2 at C5 or C7. C7-prenylation leads to accumulation of tardioxopiperazine B without further modification by echPT2. In contrast, the C5-prenylated tardioxopiperazine A can be prenylated again by echPT2, predominantly at C7 to form echinulin or less frequently at C4 to give variecolorin L. EchPT2 also accepts neoechilunin A to produce varlecolorin G (prenylation at C5) or isoechinulin A (prenylation at C7). EchPT2 further converts isoechinulin A into dehydroechinulin. Moreover, a yet unidentified enzyme can also convert neoechilunin A into neoechilunin B by introducing a double bond between positions C14 and C17 and thus provides a further substrate to echPT2 for C5 and C7 prenylation. In Aspergillus ruber (strain CBS 135680), this protein is Echilunin cytochrome P450 monooxygenase.